Here is a 1294-residue protein sequence, read N- to C-terminus: uncharacterized protein (1294 aa).

This is an uncharacterized protein from Schizosaccharomyces pombe (strain 972 / ATCC 24843) (Fission yeast).